The following is a 176-amino-acid chain: Lactoylglutathione lyase (176 aa).

Residues Val23–Ala167 form the VOC domain. His26 is a binding site for Ni(2+). Residue Arg30 participates in substrate binding. Glu92 contacts Ni(2+). Substrate-binding residues include Asn96, Arg114, and His118. His118 and Glu163 together coordinate Ni(2+). Catalysis depends on Glu163, which acts as the Proton donor/acceptor.

The protein belongs to the glyoxalase I family. Monomer. It depends on Ni(2+) as a cofactor. Zn(2+) is required as a cofactor.

It carries out the reaction (R)-S-lactoylglutathione = methylglyoxal + glutathione. The protein operates within secondary metabolite metabolism; methylglyoxal degradation; (R)-lactate from methylglyoxal: step 1/2. Catalyzes the conversion of hemimercaptal, formed from methylglyoxal and glutathione, to S-lactoylglutathione. The sequence is that of Lactoylglutathione lyase (gloA) from Pseudomonas aeruginosa (strain ATCC 15692 / DSM 22644 / CIP 104116 / JCM 14847 / LMG 12228 / 1C / PRS 101 / PAO1).